The following is a 281-amino-acid chain: NADPH-dependent 7-cyano-7-deazaguanine reductase (281 aa).

Residue 88 to 90 (VES) coordinates substrate. 90–91 (SK) is an NADPH binding site. Catalysis depends on Cys-189, which acts as the Thioimide intermediate. Asp-196 (proton donor) is an active-site residue. Substrate is bound at residue 228–229 (HE). 257–258 (RG) is a binding site for NADPH.

The protein belongs to the GTP cyclohydrolase I family. QueF type 2 subfamily. As to quaternary structure, homodimer.

The protein localises to the cytoplasm. The enzyme catalyses 7-aminomethyl-7-carbaguanine + 2 NADP(+) = 7-cyano-7-deazaguanine + 2 NADPH + 3 H(+). It functions in the pathway tRNA modification; tRNA-queuosine biosynthesis. Catalyzes the NADPH-dependent reduction of 7-cyano-7-deazaguanine (preQ0) to 7-aminomethyl-7-deazaguanine (preQ1). In Cronobacter sakazakii (strain ATCC BAA-894) (Enterobacter sakazakii), this protein is NADPH-dependent 7-cyano-7-deazaguanine reductase.